The sequence spans 469 residues: Argininosuccinate lyase (469 aa).

This sequence belongs to the lyase 1 family. Argininosuccinate lyase subfamily.

Its subcellular location is the cytoplasm. It carries out the reaction 2-(N(omega)-L-arginino)succinate = fumarate + L-arginine. It participates in amino-acid biosynthesis; L-arginine biosynthesis; L-arginine from L-ornithine and carbamoyl phosphate: step 3/3. The protein is Argininosuccinate lyase of Burkholderia vietnamiensis (strain G4 / LMG 22486) (Burkholderia cepacia (strain R1808)).